The following is a 119-amino-acid chain: MNSTTHHISSQWINVCNSRTSSISYVRRSEHHSSTIAIECHRINILGIDRNRTVGCCDHLHRINNDVWCRLKFHIVTDAVYRSSHRNQRRSKSNYRQNRSQYLFLICHNLRASSMNNLH.

This is an uncharacterized protein from Vaccinia virus (strain Copenhagen) (VACV).